Here is a 268-residue protein sequence, read N- to C-terminus: Cytochrome c oxidase subunit 3 (268 aa).

Helical transmembrane passes span 19–39, 49–69, 85–105, 124–144, 165–185, 202–222, and 245–265; these read PWPILVSFSLFNLAIGTVLTM, FDLGLAVTVGSILLWTRDIVI, LIIGFILFIISEVFAFISVFW, PVGIIPLDTFSLPLFNTIILL, SIIGLFLTVALALIFSYFQAF, VFFASTGLHGIHVMLGTLFLF, and ILYWHFVDLVWLFLFLVVYFW.

Belongs to the cytochrome c oxidase subunit 3 family. In terms of assembly, component of the cytochrome c oxidase (complex IV, CIV), a multisubunit enzyme composed of a catalytic core of 3 subunits and several supernumerary subunits. The complex exists as a monomer or a dimer and forms supercomplexes (SCs) in the inner mitochondrial membrane with ubiquinol-cytochrome c oxidoreductase (cytochrome b-c1 complex, complex III, CIII).

The protein resides in the mitochondrion inner membrane. The catalysed reaction is 4 Fe(II)-[cytochrome c] + O2 + 8 H(+)(in) = 4 Fe(III)-[cytochrome c] + 2 H2O + 4 H(+)(out). Functionally, component of the cytochrome c oxidase, the last enzyme in the mitochondrial electron transport chain which drives oxidative phosphorylation. The respiratory chain contains 3 multisubunit complexes succinate dehydrogenase (complex II, CII), ubiquinol-cytochrome c oxidoreductase (cytochrome b-c1 complex, complex III, CIII) and cytochrome c oxidase (complex IV, CIV), that cooperate to transfer electrons derived from NADH and succinate to molecular oxygen, creating an electrochemical gradient over the inner membrane that drives transmembrane transport and the ATP synthase. Cytochrome c oxidase is the component of the respiratory chain that catalyzes the reduction of oxygen to water. Electrons originating from reduced cytochrome c in the intermembrane space (IMS) are transferred via the dinuclear copper A center (CU(A)) of subunit 2 and heme A of subunit 1 to the active site in subunit 1, a binuclear center (BNC) formed by heme A3 and copper B (CU(B)). The BNC reduces molecular oxygen to 2 water molecules using 4 electrons from cytochrome c in the IMS and 4 protons from the mitochondrial matrix. The chain is Cytochrome c oxidase subunit 3 (COIII) from Schizophyllum commune (Split gill fungus).